Reading from the N-terminus, the 622-residue chain is Probable potassium transport system protein Kup 1 (622 aa).

12 consecutive transmembrane segments (helical) span residues 11 to 31 (LTLG…LYAV), 50 to 70 (ILSI…VTLV), 101 to 121 (VLLL…VITP), 137 to 157 (PAFN…LFWV), 168 to 188 (FFGP…VAQI), 215 to 235 (FIIL…YADL), 247 to 267 (WFAV…ALLL), 285 to 305 (ALLP…QALI), 337 to 357 (IYLP…VMIF), 366 to 386 (AYGI…FFVI), 393 to 413 (PLWL…AFWA), and 419 to 439 (LFDG…LMIT).

The protein belongs to the HAK/KUP transporter (TC 2.A.72) family.

The protein resides in the cell inner membrane. It carries out the reaction K(+)(in) + H(+)(in) = K(+)(out) + H(+)(out). Functionally, transport of potassium into the cell. Likely operates as a K(+):H(+) symporter. The sequence is that of Probable potassium transport system protein Kup 1 from Albidiferax ferrireducens (strain ATCC BAA-621 / DSM 15236 / T118) (Rhodoferax ferrireducens).